Reading from the N-terminus, the 232-residue chain is Sugar fermentation stimulation protein homolog (232 aa).

It belongs to the SfsA family.

The protein is Sugar fermentation stimulation protein homolog of Geobacter metallireducens (strain ATCC 53774 / DSM 7210 / GS-15).